The sequence spans 316 residues: Pantothenate kinase (316 aa).

95-102 (GSVAVGKS) contributes to the ATP binding site.

This sequence belongs to the prokaryotic pantothenate kinase family.

It localises to the cytoplasm. The enzyme catalyses (R)-pantothenate + ATP = (R)-4'-phosphopantothenate + ADP + H(+). Its pathway is cofactor biosynthesis; coenzyme A biosynthesis; CoA from (R)-pantothenate: step 1/5. This Shewanella sediminis (strain HAW-EB3) protein is Pantothenate kinase.